The following is a 107-amino-acid chain: High mobility group protein HMG-I/HMG-Y (107 aa).

Residues 1-13 are compositionally biased toward polar residues; the sequence is MSESGSKSSQPLA. The segment at 1–107 is disordered; sequence MSESGSKSSQ…ISQESSEEEQ (107 aa). N-acetylserine is present on S2. K7 bears the N6-acetyllysine mark. An ADP-ribosylserine modification is found at S8. S9 is modified (ADP-ribosylserine; alternate). At S9 the chain carries Phosphoserine; alternate. Position 15 is an N6-acetyllysine; alternate (K15). K15 participates in a covalent cross-link: Glycyl lysine isopeptide (Lys-Gly) (interchain with G-Cter in SUMO2); alternate. Residues 15–24 show a composition bias toward basic and acidic residues; sequence KQEKDGTEKR. The segment at residues 21–31 is a DNA-binding region (a.T hook 1); it reads TEKRGRGRPRK. R26 carries the asymmetric dimethylarginine; alternate modification. Position 26 is an omega-N-methylarginine; alternate (R26). A Symmetric dimethylarginine; alternate modification is found at R26. Phosphoserine; by HIPK2 and CDC2 is present on S36. Position 39 is a phosphothreonine (T39). A phosphoserine mark is found at S44 and S49. Residue T53 is modified to Phosphothreonine; by HIPK2 and CDC2. DNA-binding regions (a.T hook) lie at residues 53–63 and 78–89; these read TPKRPRGRPKG and APGRKPRGRPKK. Positions 53-77 are interaction with HIPK2; the sequence is TPKRPRGRPKGSKNKGAAKTRKVTT. Over residues 55-74 the composition is skewed to basic residues; sequence KRPRGRPKGSKNKGAAKTRK. R58 and R60 each carry asymmetric dimethylarginine; by PRMT6; alternate. R58 and R60 each carry omega-N-methylarginine; by PRMT6; alternate. Residues 93–107 show a composition bias toward acidic residues; the sequence is EEEEGISQESSEEEQ. Phosphoserine occurs at positions 99, 102, and 103.

It belongs to the HMGA family. As to quaternary structure, interacts with HIPK2. Isoforms HMG-I and HMG-Y can be phosphorylated by HIPK2. Phosphorylation may modulate DNA-binding affinity. In terms of processing, methylation at Arg-58 is mutually exclusive with methylation at Arg-60.

It localises to the nucleus. It is found in the chromosome. In terms of biological role, HMG-I/Y bind preferentially to the minor groove of A+T rich regions in double-stranded DNA. It is suggested that these proteins could function in nucleosome phasing and in the 3'-end processing of mRNA transcripts. They are also involved in the transcription regulation of genes containing, or in close proximity to A+T-rich regions. The polypeptide is High mobility group protein HMG-I/HMG-Y (Hmga1) (Mus musculus (Mouse)).